A 770-amino-acid polypeptide reads, in one-letter code: MEKRAAAGPEGAPGARAPLAVVCLVNLFLTGRLSSAVPALAACSGKLEQHTERRGVIYSPAWPLNYPPGTNCSWYIQGDRGDMITISFRNFDVEESHQCSLDWLLLGPAAPPRQEAFRLCGSAIPPAFISARDHVWIFFHSDASSSGQAQGFRLSYIRGKLGQASCQTDEFRCDNGKCLPGPWQCNMVDECGDGSDEGNCSAPASEPPGSLCPGGTFPCSGARSTRCLPVERRCDGTQDCGDGSDEAGCPDLACGRRLGSFYGSFASPDLFGAARGPSDLHCTWLVDTQDPRRVLLQLELRLGYDDYVQVYEGLGERGDRLLQTLSYRSNHRPVSLEAAQGRLTVAYHARARSAGHGFNATYQVKGYCLPWEQPCGSSSEGDDGSTGEQGCFSEPQRCDGWWHCASGRDEQGCPACPPDQYPCEGGSGLCYAPADRCNNQKSCPDGADEKNCFSCQPGTFHCGTNLCIFETWRCDGQEDCQDGSDEHGCLAAVPRKVITAALIGSLVCGLLLVIALGCAFKLYSLRTQEYRAFETQMTRLEAEFVRREAPPSYGQLIAQGLIPPVEDFPVYSASQASVLQNLRTAMRRQMRRHASRRGPSRRRLGRLWNRLFHRPRAPRGQIPLLTAARTSQTVLGDGLLQAAPGPVPDPPVPNTDTGSPREAGDGPPSGSGHAPEVGPSVPPPPLNLRDPEYRPEDKERKACVDPLEDSPAPVDTPPEPCLAQDPHPQTPTASGIQDPHSAEPLGVCRSPPPTCSPILEASDDEALLVC.

Positions 1–36 are cleaved as a signal peptide; sequence MEKRAAAGPEGAPGARAPLAVVCLVNLFLTGRLSSA. Over 37-496 the chain is Extracellular; it reads VPALAACSGK…HGCLAAVPRK (460 aa). 9 disulfide bridges follow: Cys-43–Cys-72, Cys-99–Cys-120, Cys-166–Cys-178, Cys-173–Cys-191, Cys-185–Cys-200, Cys-212–Cys-227, Cys-219–Cys-240, Cys-234–Cys-249, and Cys-254–Cys-282. One can recognise a CUB 1 domain in the interval 43–159; the sequence is CSGKLEQHTE…QGFRLSYIRG (117 aa). Asn-71 carries an N-linked (GlcNAc...) asparagine glycan. LDL-receptor class A domains are found at residues 165–201 and 211–250; these read SCQT…GNCS and LCPG…AGCP. Asn-199 carries N-linked (GlcNAc...) asparagine glycosylation. One can recognise a CUB 2 domain in the interval 254–365; it reads CGRRLGSFYG…HGFNATYQVK (112 aa). Asn-359 is a glycosylation site (N-linked (GlcNAc...) asparagine). LDL-receptor class A domains follow at residues 415-453 and 454-490; these read ACPP…KNCF and SCQP…HGCL. Cystine bridges form between Cys-416/Cys-430, Cys-423/Cys-443, Cys-437/Cys-452, Cys-455/Cys-467, Cys-462/Cys-480, and Cys-474/Cys-489. Residues 497-517 form a helical membrane-spanning segment; sequence VITAALIGSLVCGLLLVIALG. At 518 to 770 the chain is on the cytoplasmic side; the sequence is CAFKLYSLRT…ASDDEALLVC (253 aa). The interval 639–753 is disordered; the sequence is LLQAAPGPVP…PLGVCRSPPP (115 aa). The segment covering 689–703 has biased composition (basic and acidic residues); the sequence is RDPEYRPEDKERKAC.

Belongs to the LDLR family. In terms of assembly, binds GGA1 and GGA2.

Its subcellular location is the membrane. It localises to the coated pit. In terms of biological role, probable receptor, which may be involved in the internalization of lipophilic molecules and/or signal transduction. Its precise role is however unclear, since it does not bind to very low density lipoprotein (VLDL) or to LRPAP1 in vitro. The sequence is that of Low-density lipoprotein receptor-related protein 3 (Lrp3) from Rattus norvegicus (Rat).